Here is a 452-residue protein sequence, read N- to C-terminus: Maltoporin (452 aa).

Residues 1–25 (MMITLRKLPLAVAVAAGVMSAQAMA) form the signal peptide.

This sequence belongs to the porin LamB (TC 1.B.3) family. Homotrimer formed of three 18-stranded antiparallel beta-barrels, containing three independent channels.

It localises to the cell outer membrane. The enzyme catalyses beta-maltose(in) = beta-maltose(out). Involved in the transport of maltose and maltodextrins. In Salmonella heidelberg (strain SL476), this protein is Maltoporin.